Consider the following 563-residue polypeptide: Probable ATP-dependent RNA helicase ddx51 (563 aa).

Positions asparagine 15–glutamine 43 match the Q motif motif. In terms of domain architecture, Helicase ATP-binding spans phenylalanine 48–phenylalanine 276. ATP is bound at residue alanine 61–threonine 68. Residues aspartate 179–aspartate 182 carry the DEAD box motif. The Helicase C-terminal domain occupies leucine 308 to arginine 482. Residues isoleucine 493–phenylalanine 537 are disordered. The segment covering aspartate 495 to glutamate 510 has biased composition (acidic residues). Residues asparagine 520–asparagine 536 show a composition bias toward low complexity.

This sequence belongs to the DEAD box helicase family. DDX51/DBP6 subfamily.

Its subcellular location is the nucleus. The protein localises to the nucleolus. It catalyses the reaction ATP + H2O = ADP + phosphate + H(+). Probable ATP-binding RNA helicase which may be involved in ribosome biogenesis. This chain is Probable ATP-dependent RNA helicase ddx51 (ddx51), found in Dictyostelium discoideum (Social amoeba).